Here is a 214-residue protein sequence, read N- to C-terminus: Outer-membrane lipoprotein LolB (214 aa).

The N-terminal stretch at 1-25 (MNNLKRFTKSIFSCIALSGLLFLGG) is a signal peptide. Cysteine 26 carries the N-palmitoyl cysteine lipid modification. Cysteine 26 carries the S-diacylglycerol cysteine lipid modification.

Belongs to the LolB family. In terms of assembly, monomer.

Its subcellular location is the cell outer membrane. Functionally, plays a critical role in the incorporation of lipoproteins in the outer membrane after they are released by the LolA protein. In Shewanella oneidensis (strain ATCC 700550 / JCM 31522 / CIP 106686 / LMG 19005 / NCIMB 14063 / MR-1), this protein is Outer-membrane lipoprotein LolB.